The primary structure comprises 119 residues: MQSLDPLFARLSRSKFRSRFRLGMKERQYCLEKGAPVIEQHAADFVAKRLAPALPANDGKQTPMRGHPVFIAQHATATCCRGCLAKWHNIPQGVSLSEEQQRYIVAVIYHWLVVQMNQP.

This is an uncharacterized protein from Escherichia coli (strain K12).